We begin with the raw amino-acid sequence, 37 residues long: Esculentin-2Ra (37 aa).

Cys31 and Cys37 are oxidised to a cystine.

Expressed by the skin glands.

Its subcellular location is the secreted. Functionally, antimicrobial peptide. The protein is Esculentin-2Ra of Pelophylax ridibundus (Marsh frog).